Consider the following 228-residue polypeptide: MGDSVSVLHPKVLLVSAGFTTSLFVGFNLYRRYCRRIRTYLDLTPSILDNQRQLYGKVTRVGDGDNFRFYHTPGGIFLGWGWLRKVPETRSALKDETLMIRLCGVDAPERSHWGKPAQPFSEEALQWLRNYVMGRYVTITPYSIDQYKRVVARAQVWKWTGRKDVSAEMIRTGIGVVYESKVGAEFGDNESWYRSLQNRAKLLRRGVWSLGKKMTTPGQFKKTYYRGE.

The chain crosses the membrane as a helical span at residues 13-30 (LLVSAGFTTSLFVGFNLY). The TNase-like domain maps to 52-210 (RQLYGKVTRV…KLLRRGVWSL (159 aa)). The active site involves R101. D106 lines the Ca(2+) pocket. Residues E109 and R149 contribute to the active site.

The protein belongs to the LCL3 family.

It is found in the mitochondrion. The protein localises to the membrane. This Meyerozyma guilliermondii (strain ATCC 6260 / CBS 566 / DSM 6381 / JCM 1539 / NBRC 10279 / NRRL Y-324) (Yeast) protein is Probable endonuclease LCL3 (LCL3).